The chain runs to 270 residues: Formamidopyrimidine-DNA glycosylase (270 aa).

The active-site Schiff-base intermediate with DNA is Pro-2. Glu-3 acts as the Proton donor in catalysis. Lys-59 serves as the catalytic Proton donor; for beta-elimination activity. DNA contacts are provided by His-91, Arg-110, and Lys-151. An FPG-type zinc finger spans residues 236-270 (RVYGRDKEPCVTCGQQVKSKVLGGRNTFWCSRCQK). Arg-260 serves as the catalytic Proton donor; for delta-elimination activity.

This sequence belongs to the FPG family. In terms of assembly, monomer. The cofactor is Zn(2+).

The enzyme catalyses Hydrolysis of DNA containing ring-opened 7-methylguanine residues, releasing 2,6-diamino-4-hydroxy-5-(N-methyl)formamidopyrimidine.. The catalysed reaction is 2'-deoxyribonucleotide-(2'-deoxyribose 5'-phosphate)-2'-deoxyribonucleotide-DNA = a 3'-end 2'-deoxyribonucleotide-(2,3-dehydro-2,3-deoxyribose 5'-phosphate)-DNA + a 5'-end 5'-phospho-2'-deoxyribonucleoside-DNA + H(+). Its function is as follows. Involved in base excision repair of DNA damaged by oxidation or by mutagenic agents. Acts as a DNA glycosylase that recognizes and removes damaged bases. Has a preference for oxidized purines, such as 7,8-dihydro-8-oxoguanine (8-oxoG). Has AP (apurinic/apyrimidinic) lyase activity and introduces nicks in the DNA strand. Cleaves the DNA backbone by beta-delta elimination to generate a single-strand break at the site of the removed base with both 3'- and 5'-phosphates. This chain is Formamidopyrimidine-DNA glycosylase, found in Bdellovibrio bacteriovorus (strain ATCC 15356 / DSM 50701 / NCIMB 9529 / HD100).